The sequence spans 148 residues: MGLEKSLMLFPLLVLVLGLVQPSLGRESSAMKFERQHMDSAGTGSSPTYCNQMMMRREMTNGSCKPVNTFVHEPLAHVHAACSQKNVTCKNGKGNCYKSSSALHITDCRLKGNSKYPNCDYQTSNYQKRIIVACEGNPYVPVHLDASV.

Residues 1–25 (MGLEKSLMLFPLLVLVLGLVQPSLG) form the signal peptide. The substrate site is built by Lys-32 and Arg-35. His-37 serves as the catalytic Proton acceptor. 4 disulfides stabilise this stretch: Cys-50–Cys-108, Cys-64–Cys-119, Cys-82–Cys-134, and Cys-89–Cys-96. Substrate contacts are provided by residues 65-69 (KPVNT), Lys-90, and Arg-109. His-143 acts as the Proton donor in catalysis.

The protein belongs to the pancreatic ribonuclease family. In terms of assembly, monomer. Interacts with and forms tight 1:1 complexes with RNH1. Dimerization of two such complexes may occur. Interaction with RNH1 inhibits this protein. In terms of tissue distribution, pancreas.

Its subcellular location is the secreted. The enzyme catalyses an [RNA] containing cytidine + H2O = an [RNA]-3'-cytidine-3'-phosphate + a 5'-hydroxy-ribonucleotide-3'-[RNA].. The catalysed reaction is an [RNA] containing uridine + H2O = an [RNA]-3'-uridine-3'-phosphate + a 5'-hydroxy-ribonucleotide-3'-[RNA].. Its function is as follows. Endonuclease that catalyzes the cleavage of RNA on the 3' side of pyrimidine nucleotides. Acts on single-stranded and double-stranded RNA. This is Ribonuclease pancreatic (RNASE1) from Gerbilliscus gambianus (Gambian gerbil).